The following is a 154-amino-acid chain: Ribonuclease H (154 aa).

The 142-residue stretch at 1–142 (MLKKIDLYTD…CDELAREAAS (142 aa)) folds into the RNase H type-1 domain. Mg(2+) is bound by residues Asp10, Glu48, Asp70, and Asp134. Positions 133–154 (CDELAREAASGKQLAEDTGYQP) are disordered.

This sequence belongs to the RNase H family. Monomer. Mg(2+) is required as a cofactor.

It localises to the cytoplasm. It catalyses the reaction Endonucleolytic cleavage to 5'-phosphomonoester.. Functionally, endonuclease that specifically degrades the RNA of RNA-DNA hybrids. The sequence is that of Ribonuclease H from Aeromonas hydrophila subsp. hydrophila (strain ATCC 7966 / DSM 30187 / BCRC 13018 / CCUG 14551 / JCM 1027 / KCTC 2358 / NCIMB 9240 / NCTC 8049).